A 323-amino-acid polypeptide reads, in one-letter code: PTS system mannose-specific EIIAB component (323 aa).

Positions 2-124 constitute a PTS EIIA type-4 domain; the sequence is TIAIVIGTHG…VALAVETGRE (123 aa). His10 serves as the catalytic Tele-phosphohistidine intermediate; for EIIA activity. Phosphohistidine; by HPr is present on His10. Lys55 carries the N6-acetyllysine modification. Residues 137–155 form a hinge region; sequence AAPAPAAAAPKAAPTPAKP. The PTS EIIB type-4 domain occupies 157 to 320; it reads GPNDYMVIGL…KLKMMDLISK (164 aa). The Pros-phosphohistidine intermediate; for EIIB activity role is filled by His175. His175 is subject to Phosphohistidine; by EIIA. Lys234 is subject to N6-acetyllysine.

In terms of assembly, homodimer.

The protein resides in the cytoplasm. Its subcellular location is the cell inner membrane. The catalysed reaction is D-mannose(out) + N(pros)-phospho-L-histidyl-[protein] = D-mannose 6-phosphate(in) + L-histidyl-[protein]. In terms of biological role, the phosphoenolpyruvate-dependent sugar phosphotransferase system (sugar PTS), a major carbohydrate active transport system, catalyzes the phosphorylation of incoming sugar substrates concomitantly with their translocation across the cell membrane. The enzyme II ManXYZ PTS system is involved in mannose transport. The chain is PTS system mannose-specific EIIAB component (manX) from Escherichia coli O157:H7.